A 231-amino-acid chain; its full sequence is 2-C-methyl-D-erythritol 4-phosphate cytidylyltransferase (231 aa).

It belongs to the IspD/TarI cytidylyltransferase family. IspD subfamily.

The catalysed reaction is 2-C-methyl-D-erythritol 4-phosphate + CTP + H(+) = 4-CDP-2-C-methyl-D-erythritol + diphosphate. It functions in the pathway isoprenoid biosynthesis; isopentenyl diphosphate biosynthesis via DXP pathway; isopentenyl diphosphate from 1-deoxy-D-xylulose 5-phosphate: step 2/6. Functionally, catalyzes the formation of 4-diphosphocytidyl-2-C-methyl-D-erythritol from CTP and 2-C-methyl-D-erythritol 4-phosphate (MEP). This Xylella fastidiosa (strain 9a5c) protein is 2-C-methyl-D-erythritol 4-phosphate cytidylyltransferase.